A 268-amino-acid polypeptide reads, in one-letter code: Indole-3-glycerol phosphate synthase (268 aa).

It belongs to the TrpC family.

It carries out the reaction 1-(2-carboxyphenylamino)-1-deoxy-D-ribulose 5-phosphate + H(+) = (1S,2R)-1-C-(indol-3-yl)glycerol 3-phosphate + CO2 + H2O. Its pathway is amino-acid biosynthesis; L-tryptophan biosynthesis; L-tryptophan from chorismate: step 4/5. In Magnetococcus marinus (strain ATCC BAA-1437 / JCM 17883 / MC-1), this protein is Indole-3-glycerol phosphate synthase.